Reading from the N-terminus, the 245-residue chain is 3-deoxy-manno-octulosonate cytidylyltransferase (245 aa).

The protein belongs to the KdsB family.

It is found in the cytoplasm. It catalyses the reaction 3-deoxy-alpha-D-manno-oct-2-ulosonate + CTP = CMP-3-deoxy-beta-D-manno-octulosonate + diphosphate. The protein operates within nucleotide-sugar biosynthesis; CMP-3-deoxy-D-manno-octulosonate biosynthesis; CMP-3-deoxy-D-manno-octulosonate from 3-deoxy-D-manno-octulosonate and CTP: step 1/1. Its pathway is bacterial outer membrane biogenesis; lipopolysaccharide biosynthesis. In terms of biological role, activates KDO (a required 8-carbon sugar) for incorporation into bacterial lipopolysaccharide in Gram-negative bacteria. The polypeptide is 3-deoxy-manno-octulosonate cytidylyltransferase (Fusobacterium nucleatum subsp. nucleatum (strain ATCC 25586 / DSM 15643 / BCRC 10681 / CIP 101130 / JCM 8532 / KCTC 2640 / LMG 13131 / VPI 4355)).